The chain runs to 550 residues: tRNA modification GTPase MnmE (550 aa).

The (6S)-5-formyl-5,6,7,8-tetrahydrofolate site is built by arginine 20, glutamate 78, and arginine 116. One can recognise a TrmE-type G domain in the interval 212-478; it reads GFSVVIVGKP…LLDKIFDIIS (267 aa). Residue asparagine 222 participates in K(+) binding. GTP-binding positions include 222-227, 241-247, and 266-269; these read NVGKST, TDIPGTT, and DTAG. Serine 226 contacts Mg(2+). Residues threonine 241, isoleucine 243, and threonine 246 each coordinate K(+). A Mg(2+)-binding site is contributed by threonine 247. (6S)-5-formyl-5,6,7,8-tetrahydrofolate is bound at residue lysine 550.

Belongs to the TRAFAC class TrmE-Era-EngA-EngB-Septin-like GTPase superfamily. TrmE GTPase family. Homodimer. Heterotetramer of two MnmE and two MnmG subunits. Requires K(+) as cofactor.

It localises to the cytoplasm. In terms of biological role, exhibits a very high intrinsic GTPase hydrolysis rate. Involved in the addition of a carboxymethylaminomethyl (cmnm) group at the wobble position (U34) of certain tRNAs, forming tRNA-cmnm(5)s(2)U34. This is tRNA modification GTPase MnmE from Neorickettsia sennetsu (strain ATCC VR-367 / Miyayama) (Ehrlichia sennetsu).